Here is a 218-residue protein sequence, read N- to C-terminus: Claudin-5 (218 aa).

The Cytoplasmic segment spans residues 1 to 7 (MGSAALE). A helical membrane pass occupies residues 8–28 (ILGLVLCLVGWVGLILACGLP). Over 29–81 (MWQVTAFLDHNIVTAQTTWKGLWMSCVVQSTGHMQCKVYESVLALSAEVQAAR) the chain is Extracellular. The chain crosses the membrane as a helical span at residues 82-102 (ALTVGAVLLALVALFVTLTGA). Over 103-123 (QCTTCVAPGPVKARVALTGGA) the chain is Cytoplasmic. Residues 124 to 144 (LYAVCGLLALVPLCWFANIVV) traverse the membrane as a helical segment. Over 145–160 (REFYDPTVPVSQKYEL) the chain is Extracellular. A helical transmembrane segment spans residues 161-181 (GAALYIGWAASALLMCGGGLV). The Cytoplasmic portion of the chain corresponds to 182-218 (CCGAWVCTGRPEFSFPVKYSAPRRPTANGDYDKKNYV). The tract at residues 217–218 (YV) is interactions with TJP1, TJP2 and TJP3.

The protein belongs to the claudin family. Interacts with MPDZ. Directly interacts with TJP1/ZO-1, TJP2/ZO-2 and TJP3/ZO-3. Widely expressed with highest levels in the lung.

The protein resides in the cell junction. It localises to the tight junction. Its subcellular location is the cell membrane. Functionally, plays a major role in tight junction-specific obliteration of the intercellular space, through calcium-independent cell-adhesion activity. The protein is Claudin-5 (Cldn5) of Mus musculus (Mouse).